Here is a 145-residue protein sequence, read N- to C-terminus: Photosystem I reaction center subunit XI (145 aa).

The next 3 membrane-spanning stretches (helical) occupy residues 48 to 68 (LEIG…LGPL), 75 to 95 (LLVG…ALTI), and 125 to 145 (IGAL…SFFA).

Belongs to the PsaL family.

The protein localises to the plastid. It localises to the chloroplast thylakoid membrane. The polypeptide is Photosystem I reaction center subunit XI (Isochrysis galbana (Marine planktonic alga)).